Here is a 200-residue protein sequence, read N- to C-terminus: Ependymin-related protein 1 (200 aa).

The first 17 residues, Met-1–Gly-17, serve as a signal peptide directing secretion. N-linked (GlcNAc...) asparagine glycosylation is found at Asn-36, Asn-124, and Asn-136.

The protein belongs to the ependymin family. As to expression, component of the acid-soluble and acid-insoluble organic matrix of prismatic shell layers (at protein level). Expressed discontinuously in the anterior zone of the outer fold of the mantle where its expression correlates with shell pigmentation.

It is found in the secreted. In Haliotis asinina (Donkey's ear abalone), this protein is Ependymin-related protein 1.